Consider the following 467-residue polypeptide: Probable protein phosphatase 2C 55 (467 aa).

A PPM-type phosphatase domain is found at 222 to 458 (SCYLPHPDKE…DDITVVVSYV (237 aa)). Mn(2+) contacts are provided by D252, G253, D383, and D449.

This sequence belongs to the PP2C family. Mg(2+) is required as a cofactor. The cofactor is Mn(2+).

The enzyme catalyses O-phospho-L-seryl-[protein] + H2O = L-seryl-[protein] + phosphate. It carries out the reaction O-phospho-L-threonyl-[protein] + H2O = L-threonyl-[protein] + phosphate. This is Probable protein phosphatase 2C 55 from Arabidopsis thaliana (Mouse-ear cress).